The following is a 1169-amino-acid chain: RecBCD enzyme subunit RecB (1169 aa).

Residues 1–436 (MNKILEKIQN…IVLKINHRSS (436 aa)) enclose the UvrD-like helicase ATP-binding domain. The segment at 1 to 839 (MNKILEKIQN…LLEIAKIFTI (839 aa)) is DNA-binding and helicase activity, interacts with RecC. 18-25 (ASAGTGKT) is an ATP binding site. Residues 459-746 (IEKIDFTNSL…ELMTIHKSKG (288 aa)) enclose the UvrD-like helicase C-terminal domain. The nuclease activity, interacts with RecD and RecA stretch occupies residues 883-1169 (KEYTSSFSSL…ILELGIKRHL (287 aa)). Mg(2+) contacts are provided by His-939, Asp-1052, and Asp-1065. The active-site For nuclease activity is Asp-1065.

This sequence belongs to the helicase family. UvrD subfamily. In terms of assembly, heterotrimer of RecB, RecC and RecD. All subunits contribute to DNA-binding. Interacts with RecA. Requires Mg(2+) as cofactor.

The catalysed reaction is Exonucleolytic cleavage (in the presence of ATP) in either 5'- to 3'- or 3'- to 5'-direction to yield 5'-phosphooligonucleotides.. The enzyme catalyses Couples ATP hydrolysis with the unwinding of duplex DNA by translocating in the 3'-5' direction.. It catalyses the reaction ATP + H2O = ADP + phosphate + H(+). Functionally, a helicase/nuclease that prepares dsDNA breaks (DSB) for recombinational DNA repair. Binds to DSBs and unwinds DNA via a highly rapid and processive ATP-dependent bidirectional helicase activity. Unwinds dsDNA until it encounters a Chi (crossover hotspot instigator) sequence from the 3' direction. Cuts ssDNA a few nucleotides 3' to the Chi site. The properties and activities of the enzyme are changed at Chi. The Chi-altered holoenzyme produces a long 3'-ssDNA overhang and facilitates RecA-binding to the ssDNA for homologous DNA recombination and repair. Holoenzyme degrades any linearized DNA that is unable to undergo homologous recombination. In the holoenzyme this subunit contributes ATPase, 3'-5' helicase, exonuclease activity and loads RecA onto ssDNA. The chain is RecBCD enzyme subunit RecB from Borreliella burgdorferi (strain ATCC 35210 / DSM 4680 / CIP 102532 / B31) (Borrelia burgdorferi).